The following is a 319-amino-acid chain: Geranylgeranyl pyrophosphate synthase (319 aa).

Residues Lys-42, Arg-45, and His-74 each contribute to the isopentenyl diphosphate site. Mg(2+)-binding residues include Asp-81 and Asp-85. Arg-90 is a dimethylallyl diphosphate binding site. Arg-91 lines the isopentenyl diphosphate pocket. Residues Lys-172, Thr-173, Gln-210, Lys-226, and Lys-236 each contribute to the dimethylallyl diphosphate site.

This sequence belongs to the FPP/GGPP synthase family. Homodimer. It depends on Mg(2+) as a cofactor.

The enzyme catalyses isopentenyl diphosphate + dimethylallyl diphosphate = (2E)-geranyl diphosphate + diphosphate. The catalysed reaction is isopentenyl diphosphate + (2E)-geranyl diphosphate = (2E,6E)-farnesyl diphosphate + diphosphate. It catalyses the reaction isopentenyl diphosphate + (2E,6E)-farnesyl diphosphate = (2E,6E,10E)-geranylgeranyl diphosphate + diphosphate. It participates in isoprenoid biosynthesis; geranyl diphosphate biosynthesis; geranyl diphosphate from dimethylallyl diphosphate and isopentenyl diphosphate: step 1/1. The protein operates within isoprenoid biosynthesis; farnesyl diphosphate biosynthesis; farnesyl diphosphate from geranyl diphosphate and isopentenyl diphosphate: step 1/1. It functions in the pathway isoprenoid biosynthesis; geranylgeranyl diphosphate biosynthesis; geranylgeranyl diphosphate from farnesyl diphosphate and isopentenyl diphosphate: step 1/1. Its function is as follows. Catalyzes the addition of 3 molecules of isopentenyl diphosphate (IPP) onto dimethylallyl diphosphate (DMAPP) to form geranylgeranyl pyrophosphate (GGPP). Catalyzes the synthesis of geranylgeranyl pyrophosphate as a major product and of farnesyl pyrophosphate in smaller amounts. This is Geranylgeranyl pyrophosphate synthase from Geoglobus acetivorans.